We begin with the raw amino-acid sequence, 164 residues long: UPF0304 protein YfbU (164 aa).

Belongs to the UPF0304 family.

This chain is UPF0304 protein YfbU, found in Escherichia coli O127:H6 (strain E2348/69 / EPEC).